An 835-amino-acid chain; its full sequence is Prickle-like protein 1-A (835 aa).

Residues 14-122 (FGCQRSSTSD…NIKMLSRAVM (109 aa)) form the PET domain. LIM zinc-binding domains are found at residues 124 to 188 (ATCE…ELLK), 189 to 249 (PRCS…HYAE), and 250 to 313 (YCES…EDVH). Disordered regions lie at residues 312-346 (VHAS…ADQC), 426-455 (LFQQ…QRNN), 603-706 (CQEK…RKRS), and 769-835 (CSSS…CIIS). 3 stretches are compositionally biased toward basic and acidic residues: residues 432-453 (EDNR…DLQR), 603-614 (CQEKPPPEEKPM), and 646-655 (EIRRPPMSER). 2 stretches are compositionally biased toward basic residues: residues 669–683 (RPHH…KSRK) and 819–835 (SKSK…CIIS). Position 832 is a cysteine methyl ester (cysteine 832). Cysteine 832 carries S-farnesyl cysteine lipidation. A propeptide spans 833-835 (IIS) (removed in mature form).

This sequence belongs to the prickle / espinas / testin family. Interacts with dvl2/dsh and mapk8/jnk1. As to expression, expressed in the dorsal marginal zone of early gastrulae (stage 10). As gastrulation proceeds, expression expands to include the lateral and ventral marginal zones, excluding the few rows of cells above the blastopore lip. Expression moves dorsally with gastrulation cell movements, and by the end of gastrulation expression is seen in dorsal mesoderm and posterior but not anterior neural ectoderm. Expression becomes down-regulated in mesoderm but remains strong in posterior ectoderm through the neurula stages. During tailbud stages, expressed in the pronephric duct, tailbud, tailtip and forming somites. In the most posterior regions, expressed in notochord and in the floorplate of the neural tube with weak expression in the roofplate. At stage 30, expressed in a complex pattern in the head including strong expression in the lens and otic vesicle.

Its subcellular location is the cell membrane. Functionally, acts in a planar cell polarity (PCP) complex; polarization along the apical/basal axis of epithelial cells. Regulates the polarized assembly of fibronectrin on the surface of the mesoderm during gastrulation. Essential for gastrulation cell movements, cooperating with dvl2/dsh to activate jnk. Acts together with tes to control axial elongation. The chain is Prickle-like protein 1-A (prickle1-a) from Xenopus laevis (African clawed frog).